We begin with the raw amino-acid sequence, 152 residues long: Ubiquitin-conjugating enzyme E2 A (152 aa).

In terms of domain architecture, UBC core spans 4–150; the sequence is PARRRLMRDF…VSAIVEQSWR (147 aa). Cys88 acts as the Glycyl thioester intermediate in catalysis. Phosphoserine; by CDK9 is present on Ser120.

It belongs to the ubiquitin-conjugating enzyme family. As to quaternary structure, interacts with RAD18 and WAC. Interacts with RFPL4A and CCNB1. Phosphorylation at Ser-120 by CDK9 increases activity towards histone H2B.

The protein resides in the late endosome. It localises to the lysosome. The enzyme catalyses S-ubiquitinyl-[E1 ubiquitin-activating enzyme]-L-cysteine + [E2 ubiquitin-conjugating enzyme]-L-cysteine = [E1 ubiquitin-activating enzyme]-L-cysteine + S-ubiquitinyl-[E2 ubiquitin-conjugating enzyme]-L-cysteine.. Its pathway is protein modification; protein ubiquitination. In terms of biological role, E2 ubiquitin-conjugating enzyme that accepts ubiquitin from the ubiquitin-activating enzyme E1 and transfers it to a E3 ubiquitin-protein ligase. In vitro catalyzes 'Lys-11', as well as 'Lys-48'-linked polyubiquitination. Together with the E3 enzyme BRE1 (RNF20 and/or RNF40), plays a role in transcription regulation by catalyzing the monoubiquitination of histone H2B at 'Lys-120' to form H2BK120ub1. H2BK120ub1 gives a specific tag for epigenetic transcriptional activation, elongation by RNA polymerase II, telomeric silencing, and is also a prerequisite for H3K4me and H3K79me formation. Involved in mitophagy by acting as a E2 ubiquitin-conjugating enzyme for PRKN. In association with the E3 enzyme UBR4, is involved in N-end rule-dependent protein degradation. In association with the E3 ubiquitin-protein ligase complex SIFI, inhibits the mitochondrial stress response by acting as a E2 ubiquitin-conjugating enzyme for UBR4 and KCMF1. The protein is Ubiquitin-conjugating enzyme E2 A of Homo sapiens (Human).